The primary structure comprises 467 residues: Probable circularly permuted 1,3-beta-glucanase TOS1 (467 aa).

A signal peptide spans 1–21; it reads MKFSSTTLLAGLSSLTATVSA. Over residues 158 to 172 the composition is skewed to low complexity; it reads PAVSSAAADDNANSG. 2 disordered regions span residues 158–187 and 200–223; these read PAVS…GYGS and SDIS…TASV. A compositionally biased stretch (gly residues) spans 173-185; sequence SGSGSSAGSGSGY. A compositionally biased stretch (low complexity) spans 203–222; the sequence is STKSAPTSTSAQPSSSETAS. Positions 374–379 match the ExDxxE motif motif; sequence ELDLFE. Positions 391-413 are disordered; the sequence is HLHDGQGSSQNSNNGGGGSQDYF.

It belongs to the PGA52 family. Post-translationally, cleaved by KEX2 in vitro.

It is found in the secreted. The catalysed reaction is Hydrolysis of (1-&gt;3)-beta-D-glucosidic linkages in (1-&gt;3)-beta-D-glucans.. In terms of biological role, probable circularly permuted 1,3-beta-glucanase involved in cell wall modification through beta-1,3-glucan network alterations such as increased branching or remodeling. Plays a role in engulfment by host macrophages. The chain is Probable circularly permuted 1,3-beta-glucanase TOS1 from Candida albicans (strain SC5314 / ATCC MYA-2876) (Yeast).